The following is a 107-amino-acid chain: Universal stress protein B homolog (107 aa).

A run of 2 helical transmembrane segments spans residues 6–25 (TILF…YVTA) and 89–106 (LFIL…VAFM).

The protein belongs to the universal stress protein B family.

Its subcellular location is the cell inner membrane. The chain is Universal stress protein B homolog from Vibrio cholerae serotype O1 (strain ATCC 39541 / Classical Ogawa 395 / O395).